Here is a 57-residue protein sequence, read N- to C-terminus: Large ribosomal subunit protein bL32 (57 aa).

Positions 1 to 20 (MAVPKKKTSKTKRDQRKANW) are enriched in basic residues. The tract at residues 1–21 (MAVPKKKTSKTKRDQRKANWK) is disordered.

This sequence belongs to the bacterial ribosomal protein bL32 family.

The chain is Large ribosomal subunit protein bL32 from Rippkaea orientalis (strain PCC 8801 / RF-1) (Cyanothece sp. (strain PCC 8801)).